A 212-amino-acid chain; its full sequence is MPDFITIAIPKGRILQDSVALFKKIGIDCEELLSDTRKLVFENQEQKMRYMIVRATDVPTYVEYGCADLGIVGKDTLMEAEKDLYEPLDLKFGYCRLMVAEPVELSSKDDPSAWNNIRIATKYPNVTEKYFAAKGIQVELIKLYGSIELAPLVGLSERIVDLVSTGETLKQNGLAEIETIAEITCRLIVNRASMKTKHERISKIIEGLEQHI.

This sequence belongs to the ATP phosphoribosyltransferase family. Short subfamily. As to quaternary structure, heteromultimer composed of HisG and HisZ subunits.

The protein localises to the cytoplasm. The enzyme catalyses 1-(5-phospho-beta-D-ribosyl)-ATP + diphosphate = 5-phospho-alpha-D-ribose 1-diphosphate + ATP. Its pathway is amino-acid biosynthesis; L-histidine biosynthesis; L-histidine from 5-phospho-alpha-D-ribose 1-diphosphate: step 1/9. Functionally, catalyzes the condensation of ATP and 5-phosphoribose 1-diphosphate to form N'-(5'-phosphoribosyl)-ATP (PR-ATP). Has a crucial role in the pathway because the rate of histidine biosynthesis seems to be controlled primarily by regulation of HisG enzymatic activity. The polypeptide is ATP phosphoribosyltransferase (Citrifermentans bemidjiense (strain ATCC BAA-1014 / DSM 16622 / JCM 12645 / Bem) (Geobacter bemidjiensis)).